A 346-amino-acid polypeptide reads, in one-letter code: Holliday junction branch migration complex subunit RuvB (346 aa).

Positions 1–182 are large ATPase domain (RuvB-L); it reads MSEPARLISP…FGIPVRLSFY (182 aa). ATP contacts are provided by residues leucine 21, arginine 22, glycine 63, lysine 66, threonine 67, threonine 68, 129–131, arginine 172, tyrosine 182, and arginine 219; that span reads EDF. Threonine 67 is a Mg(2+) binding site. The tract at residues 183 to 253 is small ATPAse domain (RuvB-S); sequence TVEELELIVR…IADEALTRLL (71 aa). The interval 256–346 is head domain (RuvB-H); it reads NVGFDQLDKR…AQFRLFQEDN (91 aa). Arginine 292, arginine 311, and arginine 316 together coordinate DNA.

This sequence belongs to the RuvB family. As to quaternary structure, homohexamer. Forms an RuvA(8)-RuvB(12)-Holliday junction (HJ) complex. HJ DNA is sandwiched between 2 RuvA tetramers; dsDNA enters through RuvA and exits via RuvB. An RuvB hexamer assembles on each DNA strand where it exits the tetramer. Each RuvB hexamer is contacted by two RuvA subunits (via domain III) on 2 adjacent RuvB subunits; this complex drives branch migration. In the full resolvosome a probable DNA-RuvA(4)-RuvB(12)-RuvC(2) complex forms which resolves the HJ.

It localises to the cytoplasm. The enzyme catalyses ATP + H2O = ADP + phosphate + H(+). Functionally, the RuvA-RuvB-RuvC complex processes Holliday junction (HJ) DNA during genetic recombination and DNA repair, while the RuvA-RuvB complex plays an important role in the rescue of blocked DNA replication forks via replication fork reversal (RFR). RuvA specifically binds to HJ cruciform DNA, conferring on it an open structure. The RuvB hexamer acts as an ATP-dependent pump, pulling dsDNA into and through the RuvAB complex. RuvB forms 2 homohexamers on either side of HJ DNA bound by 1 or 2 RuvA tetramers; 4 subunits per hexamer contact DNA at a time. Coordinated motions by a converter formed by DNA-disengaged RuvB subunits stimulates ATP hydrolysis and nucleotide exchange. Immobilization of the converter enables RuvB to convert the ATP-contained energy into a lever motion, pulling 2 nucleotides of DNA out of the RuvA tetramer per ATP hydrolyzed, thus driving DNA branch migration. The RuvB motors rotate together with the DNA substrate, which together with the progressing nucleotide cycle form the mechanistic basis for DNA recombination by continuous HJ branch migration. Branch migration allows RuvC to scan DNA until it finds its consensus sequence, where it cleaves and resolves cruciform DNA. The sequence is that of Holliday junction branch migration complex subunit RuvB from Rhizobium johnstonii (strain DSM 114642 / LMG 32736 / 3841) (Rhizobium leguminosarum bv. viciae).